An 83-amino-acid polypeptide reads, in one-letter code: UPF0297 protein CLK_1948 (83 aa).

The protein belongs to the UPF0297 family.

The chain is UPF0297 protein CLK_1948 from Clostridium botulinum (strain Loch Maree / Type A3).